A 594-amino-acid polypeptide reads, in one-letter code: Isocitrate dehydrogenase kinase/phosphatase (594 aa).

Residues 315–321 (APGIRGM) and lysine 336 each bind ATP. Residue aspartate 371 is part of the active site.

This sequence belongs to the AceK family.

Its subcellular location is the cytoplasm. It catalyses the reaction L-seryl-[isocitrate dehydrogenase] + ATP = O-phospho-L-seryl-[isocitrate dehydrogenase] + ADP + H(+). Its function is as follows. Bifunctional enzyme which can phosphorylate or dephosphorylate isocitrate dehydrogenase (IDH) on a specific serine residue. This is a regulatory mechanism which enables bacteria to bypass the Krebs cycle via the glyoxylate shunt in response to the source of carbon. When bacteria are grown on glucose, IDH is fully active and unphosphorylated, but when grown on acetate or ethanol, the activity of IDH declines drastically concomitant with its phosphorylation. The polypeptide is Isocitrate dehydrogenase kinase/phosphatase (Klebsiella pneumoniae (strain 342)).